Reading from the N-terminus, the 244-residue chain is Monothiol glutaredoxin-4 (244 aa).

The Thioredoxin domain occupies valine 3 to asparagine 110. The tract at residues alanine 116–glutamate 143 is disordered. The span at aspartate 127–glutamate 143 shows a compositional bias: acidic residues. One can recognise a Glutaredoxin domain in the interval asparagine 146–glutamine 244. Lysine 163 contributes to the glutathione binding site. A [2Fe-2S] cluster-binding site is contributed by cysteine 171. Residues arginine 200, phenylalanine 212, and leucine 225–aspartate 226 contribute to the glutathione site.

Belongs to the glutaredoxin family. Monothiol subfamily. Homodimer. Heterodimer with FRA2.

Monothiol glutaredoxin involved in the biogenesis of iron-sulfur clusters. Binds one iron-sulfur cluster per dimer. The iron-sulfur cluster is bound between subunits, and is complexed by a bound glutathione and a cysteine residue from each subunit. The chain is Monothiol glutaredoxin-4 (GRX4) from Saccharomyces cerevisiae (strain ATCC 204508 / S288c) (Baker's yeast).